Reading from the N-terminus, the 133-residue chain is uncharacterized protein (133 aa).

2 helical membrane-spanning segments follow: residues 8–28 (MVLL…LLLL) and 46–66 (SFSI…SIGA).

It localises to the membrane. This is an uncharacterized protein from Saccharomyces cerevisiae (strain ATCC 204508 / S288c) (Baker's yeast).